Here is a 108-residue protein sequence, read N- to C-terminus: Mitochondrial pyruvate carrier 4 (108 aa).

The next 3 membrane-spanning stretches (helical) occupy residues 19-35, 51-67, and 74-90; these read IHFW…IANI, IAVT…SMVI, and LFSV…YQLA.

Belongs to the mitochondrial pyruvate carrier (MPC) (TC 2.A.105) family.

It localises to the mitochondrion inner membrane. In terms of biological role, mediates the uptake of pyruvate into mitochondria. This Arabidopsis thaliana (Mouse-ear cress) protein is Mitochondrial pyruvate carrier 4.